A 309-amino-acid polypeptide reads, in one-letter code: UDP-N-acetylenolpyruvoylglucosamine reductase (309 aa).

Positions 33–195 constitute an FAD-binding PCMH-type domain; sequence VGGQAETLFR…VRARLRTRPG (163 aa). Arg175 is an active-site residue. The active-site Proton donor is Ser224. Residue Glu294 is part of the active site.

It belongs to the MurB family. The cofactor is FAD.

The protein resides in the cytoplasm. It carries out the reaction UDP-N-acetyl-alpha-D-muramate + NADP(+) = UDP-N-acetyl-3-O-(1-carboxyvinyl)-alpha-D-glucosamine + NADPH + H(+). Its pathway is cell wall biogenesis; peptidoglycan biosynthesis. Functionally, cell wall formation. This is UDP-N-acetylenolpyruvoylglucosamine reductase from Granulibacter bethesdensis (strain ATCC BAA-1260 / CGDNIH1).